Reading from the N-terminus, the 420-residue chain is Pyrophosphate--fructose 6-phosphate 1-phosphotransferase (420 aa).

Residue G13 participates in diphosphate binding. Residues 142–144, 190–192, E247, and 297–300 each bind substrate; these read TVD, MGR, and YLQR. D144 acts as the Proton acceptor in catalysis.

Belongs to the phosphofructokinase type A (PFKA) family. PPi-dependent PFK group II subfamily. Clade 'B2' sub-subfamily. As to quaternary structure, homodimer. Requires Mg(2+) as cofactor. Co(2+) serves as cofactor. It depends on Mn(2+) as a cofactor.

The protein localises to the cytoplasm. It carries out the reaction beta-D-fructose 6-phosphate + diphosphate = beta-D-fructose 1,6-bisphosphate + phosphate + H(+). It functions in the pathway carbohydrate degradation; glycolysis; D-glyceraldehyde 3-phosphate and glycerone phosphate from D-glucose: step 3/4. With respect to regulation, non-allosteric. In terms of biological role, catalyzes the phosphorylation of D-fructose 6-phosphate, the first committing step of glycolysis. Uses inorganic phosphate (PPi) as phosphoryl donor instead of ATP like common ATP-dependent phosphofructokinases (ATP-PFKs), which renders the reaction reversible, and can thus function both in glycolysis and gluconeogenesis. Consistently, PPi-PFK can replace the enzymes of both the forward (ATP-PFK) and reverse (fructose-bisphosphatase (FBPase)) reactions. The protein is Pyrophosphate--fructose 6-phosphate 1-phosphotransferase of Methylococcus capsulatus (strain ATCC 33009 / NCIMB 11132 / Bath).